The sequence spans 344 residues: Dihydroorotase (344 aa).

Residues H14 and H16 each coordinate Zn(2+). Residues 16-18 (HLR) and N42 contribute to the substrate site. Residues K100, H137, and H175 each coordinate Zn(2+). K100 carries the post-translational modification N6-carboxylysine. H137 lines the substrate pocket. L220 serves as a coordination point for substrate. Residue D248 participates in Zn(2+) binding. D248 is an active-site residue. Positions 252 and 264 each coordinate substrate.

Belongs to the metallo-dependent hydrolases superfamily. DHOase family. Class II DHOase subfamily. Homodimer. Zn(2+) is required as a cofactor.

It carries out the reaction (S)-dihydroorotate + H2O = N-carbamoyl-L-aspartate + H(+). It functions in the pathway pyrimidine metabolism; UMP biosynthesis via de novo pathway; (S)-dihydroorotate from bicarbonate: step 3/3. Catalyzes the reversible cyclization of carbamoyl aspartate to dihydroorotate. The sequence is that of Dihydroorotase from Cupriavidus necator (strain ATCC 17699 / DSM 428 / KCTC 22496 / NCIMB 10442 / H16 / Stanier 337) (Ralstonia eutropha).